Here is a 314-residue protein sequence, read N- to C-terminus: Formimidoylglutamase (314 aa).

Histidine 127, aspartate 153, histidine 155, aspartate 157, aspartate 245, and aspartate 247 together coordinate Mn(2+).

The protein belongs to the arginase family. The cofactor is Mn(2+).

The catalysed reaction is N-formimidoyl-L-glutamate + H2O = formamide + L-glutamate. It functions in the pathway amino-acid degradation; L-histidine degradation into L-glutamate; L-glutamate from N-formimidoyl-L-glutamate (hydrolase route): step 1/1. Functionally, catalyzes the conversion of N-formimidoyl-L-glutamate to L-glutamate and formamide. This is Formimidoylglutamase from Aeromonas hydrophila subsp. hydrophila (strain ATCC 7966 / DSM 30187 / BCRC 13018 / CCUG 14551 / JCM 1027 / KCTC 2358 / NCIMB 9240 / NCTC 8049).